The following is a 70-amino-acid chain: DNA-directed RNA polymerase subunit epsilon (70 aa).

It belongs to the RNA polymerase subunit epsilon family. RNAP is composed of a core of 2 alpha, a beta and a beta' subunit. The core is associated with a delta subunit, and at least one of epsilon or omega. When a sigma factor is associated with the core the holoenzyme is formed, which can initiate transcription.

The enzyme catalyses RNA(n) + a ribonucleoside 5'-triphosphate = RNA(n+1) + diphosphate. In terms of biological role, a non-essential component of RNA polymerase (RNAP). This Enterococcus faecalis (strain ATCC 700802 / V583) protein is DNA-directed RNA polymerase subunit epsilon.